Here is a 605-residue protein sequence, read N- to C-terminus: IQ domain-containing protein IQM2 (605 aa).

Residues 105–134 (KHEAAIKLQKVYKSFRTRRKLADCAVLVEQ) enclose the IQ domain. A disordered region spans residues 408–505 (QDKVDPSGEE…EEGETKESEV (98 aa)). Residues 425 to 440 (SISRKQSDLETPEKME) show a composition bias toward basic and acidic residues. Residues 462–480 (DYDSGDDEEEEEEMFELEQ) show a composition bias toward acidic residues. Positions 481-490 (ESMPSEQSSP) are enriched in low complexity. Residues 491–505 (RGEEKEEGETKESEV) show a composition bias toward basic and acidic residues.

In terms of tissue distribution, expressed in rosette and cauline leaves, stems, flowers and siliques, and at lower levels in roots.

The protein resides in the cytoplasm. It localises to the nucleus. Functionally, may be involved in biotic and abiotic stress responses. The sequence is that of IQ domain-containing protein IQM2 from Arabidopsis thaliana (Mouse-ear cress).